The sequence spans 555 residues: Glucose-6-phosphate isomerase (555 aa).

Residues 169–170, 219–224, Gln364, Glu368, His399, and Lys521 each bind D-glucose 6-phosphate; these read GS and SKTFTT. Residue Glu368 is the Proton donor of the active site. Residues His399 and Lys521 contribute to the active site.

The protein belongs to the GPI family. Homodimer.

The protein localises to the cytoplasm. It is found in the cytosol. It catalyses the reaction alpha-D-glucose 6-phosphate = beta-D-fructose 6-phosphate. It functions in the pathway carbohydrate degradation; glycolysis; D-glyceraldehyde 3-phosphate and glycerone phosphate from D-glucose: step 2/4. Functionally, in the cytoplasm, catalyzes the conversion of glucose-6-phosphate to fructose-6-phosphate, the second step in glycolysis, and the reverse reaction during gluconeogenesis. This chain is Glucose-6-phosphate isomerase (RAG2), found in Kluyveromyces lactis (strain ATCC 8585 / CBS 2359 / DSM 70799 / NBRC 1267 / NRRL Y-1140 / WM37) (Yeast).